A 309-amino-acid chain; its full sequence is Protein RTM1 (309 aa).

Transmembrane regions (helical) follow at residues 22-42 (AIALTVLFIVTTLIYSLQVVW), 83-103 (TFSAFIPLFFGCIMEIVGYIA), 119-139 (IQAVLLLIAPALYAATIYMLF), 162-182 (FFVFGDVVSFCLQAAGGGLMA), 193-213 (LITAGLVIQIVFFGVFIINEF), 233-253 (WWFLNLTLMLSSILIMVRSIV), and 278-298 (AVPMLLAAIVFIVGSFFGNIF).

It belongs to the lipid-translocating exporter (LTE) (TC 9.A.26.1) family.

Its subcellular location is the membrane. Confers resistance to molasses (to a particular toxic element present in some molasses). The polypeptide is Protein RTM1 (RTM1) (Saccharomyces cerevisiae (Baker's yeast)).